We begin with the raw amino-acid sequence, 70 residues long: Protein SlyX homolog (70 aa).

The protein belongs to the SlyX family.

This chain is Protein SlyX homolog, found in Shewanella sediminis (strain HAW-EB3).